Reading from the N-terminus, the 352-residue chain is Non-disjunction protein 1 (352 aa).

In terms of assembly, interacts with MPS3.

It localises to the nucleus. The protein localises to the chromosome. It is found in the telomere. In terms of biological role, required for telomeric clustering (bouquet stage) during meiosis 1 prophase, formation and efficient homolog pairing, meiosis 1 disjunction, and telomere deletion during meiosis. Also promotes meiotic recombination. This is Non-disjunction protein 1 (NDJ1) from Saccharomyces cerevisiae (strain ATCC 204508 / S288c) (Baker's yeast).